A 415-amino-acid chain; its full sequence is uncharacterized protein (415 aa).

2 residues coordinate [4Fe-4S] cluster: cysteine 276 and cysteine 316.

Homodimer. [4Fe-4S] cluster serves as cofactor.

This is an uncharacterized protein from Methanocaldococcus jannaschii (strain ATCC 43067 / DSM 2661 / JAL-1 / JCM 10045 / NBRC 100440) (Methanococcus jannaschii).